Reading from the N-terminus, the 365-residue chain is Aminomethyltransferase (365 aa).

It belongs to the GcvT family. In terms of assembly, the glycine cleavage system is composed of four proteins: P, T, L and H.

It catalyses the reaction N(6)-[(R)-S(8)-aminomethyldihydrolipoyl]-L-lysyl-[protein] + (6S)-5,6,7,8-tetrahydrofolate = N(6)-[(R)-dihydrolipoyl]-L-lysyl-[protein] + (6R)-5,10-methylene-5,6,7,8-tetrahydrofolate + NH4(+). Functionally, the glycine cleavage system catalyzes the degradation of glycine. The sequence is that of Aminomethyltransferase from Bacillus pumilus (strain SAFR-032).